A 201-amino-acid polypeptide reads, in one-letter code: Large ribosomal subunit protein bL25 (201 aa).

The protein belongs to the bacterial ribosomal protein bL25 family. CTC subfamily. As to quaternary structure, part of the 50S ribosomal subunit; part of the 5S rRNA/L5/L18/L25 subcomplex. Contacts the 5S rRNA. Binds to the 5S rRNA independently of L5 and L18.

Functionally, this is one of the proteins that binds to the 5S RNA in the ribosome where it forms part of the central protuberance. The polypeptide is Large ribosomal subunit protein bL25 (Burkholderia cenocepacia (strain HI2424)).